The following is a 141-amino-acid chain: uncharacterized protein (141 aa).

This is an uncharacterized protein from Acheta domesticus (House cricket).